The sequence spans 576 residues: Deformed epidermal autoregulatory factor 1 (576 aa).

Disordered stretches follow at residues 52 to 76 (VTSS…GGGN), 189 to 215 (AGGA…NPST), and 309 to 362 (ESAS…SGSG). 2 stretches are compositionally biased toward gly residues: residues 61-76 (GSGG…GGGN) and 191-207 (GASG…GGSS). Positions 210–291 (SENPSTQHNE…QSLIDEGTLT (82 aa)) constitute an SAND domain. Residues 324–340 (RKRNQTDLDMESGPKRK) carry the Nuclear localization signal motif. Residues 345–362 (HSNNNNSNTNNNNTSGSG) are compositionally biased toward low complexity. Zn(2+)-binding residues include Cys521, Cys524, Cys532, Cys535, Cys541, Cys545, His553, and Cys557. The MYND-type zinc finger occupies 521–557 (CANCNREALAECSLCRKTPYCSEFCQRKDWNAHQVEC).

Its subcellular location is the nucleus. In terms of biological role, transcription factor that binds the homeotic Deformed (Dfd) response element. High affinity binding sites contain at least 1 TTCG motif surrounded by additional TCG sequences. May be involved in the selective action of Dfd on these sites without binding directly to the Dfd protein. Requirement of DEAF1 activity may be a common feature of enhancers targeted by Dfd. The protein is Deformed epidermal autoregulatory factor 1 (Deaf1) of Drosophila melanogaster (Fruit fly).